A 197-amino-acid chain; its full sequence is Holliday junction branch migration complex subunit RuvA (197 aa).

A domain I region spans residues 1-63 (MFEYLNGKLV…EDAHSLYGFV (63 aa)). Residues 64 to 142 (NEAEKALFLR…ATGTVGISLL (79 aa)) form a domain II region. The flexible linker stretch occupies residues 142–146 (LDAGP). The tract at residues 147–197 (AGNLALEEAIEALQALGYKATELKKIEKKLAQETGLTSEEYIKSALKLMMK) is domain III.

This sequence belongs to the RuvA family. In terms of assembly, homotetramer. Forms an RuvA(8)-RuvB(12)-Holliday junction (HJ) complex. HJ DNA is sandwiched between 2 RuvA tetramers; dsDNA enters through RuvA and exits via RuvB. An RuvB hexamer assembles on each DNA strand where it exits the tetramer. Each RuvB hexamer is contacted by two RuvA subunits (via domain III) on 2 adjacent RuvB subunits; this complex drives branch migration. In the full resolvosome a probable DNA-RuvA(4)-RuvB(12)-RuvC(2) complex forms which resolves the HJ.

It localises to the cytoplasm. Its function is as follows. The RuvA-RuvB-RuvC complex processes Holliday junction (HJ) DNA during genetic recombination and DNA repair, while the RuvA-RuvB complex plays an important role in the rescue of blocked DNA replication forks via replication fork reversal (RFR). RuvA specifically binds to HJ cruciform DNA, conferring on it an open structure. The RuvB hexamer acts as an ATP-dependent pump, pulling dsDNA into and through the RuvAB complex. HJ branch migration allows RuvC to scan DNA until it finds its consensus sequence, where it cleaves and resolves the cruciform DNA. In Lactococcus lactis subsp. lactis (strain IL1403) (Streptococcus lactis), this protein is Holliday junction branch migration complex subunit RuvA.